Reading from the N-terminus, the 511-residue chain is Probable cytochrome P450 4ac2 (511 aa).

The heme site is built by Glu-318 and Cys-455.

Belongs to the cytochrome P450 family. Heme serves as cofactor.

The protein localises to the endoplasmic reticulum membrane. The protein resides in the microsome membrane. In terms of biological role, may be involved in the metabolism of insect hormones and in the breakdown of synthetic insecticides. The sequence is that of Probable cytochrome P450 4ac2 (Cyp4ac2) from Drosophila melanogaster (Fruit fly).